Consider the following 231-residue polypeptide: Orotidine 5'-phosphate decarboxylase (231 aa).

Substrate is bound by residues Asp9, Lys34, 62–71, Thr117, Arg179, Gln188, Gly208, and Arg209; that span reads DLKLHDIPSV. Catalysis depends on Lys64, which acts as the Proton donor.

This sequence belongs to the OMP decarboxylase family. Type 1 subfamily. As to quaternary structure, homodimer.

The catalysed reaction is orotidine 5'-phosphate + H(+) = UMP + CO2. It participates in pyrimidine metabolism; UMP biosynthesis via de novo pathway; UMP from orotate: step 2/2. Catalyzes the decarboxylation of orotidine 5'-monophosphate (OMP) to uridine 5'-monophosphate (UMP). In Aquifex aeolicus (strain VF5), this protein is Orotidine 5'-phosphate decarboxylase.